A 492-amino-acid polypeptide reads, in one-letter code: Cytochrome P450 monooxygenase rdc4 (492 aa).

Cysteine 435 lines the heme pocket.

This sequence belongs to the cytochrome P450 family. Requires heme as cofactor.

Its pathway is secondary metabolite biosynthesis. In terms of biological role, cytochrome P450 monooxygenase; part of the gene cluster that mediates the biosynthesis of radicicol, a resorcylic acid lactone (RAL) that irreversibly inhibits the HSP90 molecular chaperone, an important target for cancer chemotherapy. The radicicol cluster encodes only two apparent post-PKS enzymes, a cytochrome P450 monooxygenase (rdc4) and a non-heme halogenase (rdc2) that could introduce the epoxide and the chlorine, respectively. If this cluster includes all the genes required for radicicol biosynthesis, the remaining structural features of radicicol are presumably generated by the PKSs rdc1 and rdc5. The C-2' ketone could arise if the R-PKS rdc5 and NR-PKS rdc1 each carry out four iterations, in contrast to the five iteration-three iteration split for the hypothemycin PKSs. The origin of the cis 5',6' double bond is not known. The radicicol R-PKS rdc5 ER domain may catalyze either double bond isomerization or reduction in the third iteration. This is Cytochrome P450 monooxygenase rdc4 from Metacordyceps chlamydosporia (Nematophagous fungus).